A 379-amino-acid chain; its full sequence is Cytochrome b (379 aa).

A run of 4 helical transmembrane segments spans residues 33-53, 77-98, 113-133, and 178-198; these read FGSLLGMCLVIQILTGLFLAM, WLIRYLHANGASMFFICLFIHV, WNIGIILLLTTMATAFVGYVL, and FFAFHFILPFIIAAFALVHLL. The heme b site is built by H83 and H97. The heme b site is built by H182 and H196. H201 lines the a ubiquinone pocket. The next 4 membrane-spanning stretches (helical) occupy residues 226-246, 288-308, 320-340, and 347-367; these read IKDLLGIFLLLLILMALALFF, LGGVLALILSILILAAFPLLN, VTQTIYWIFIANLLVLTWIGG, and FTMIGQIASVTYFTIITILIP.

This sequence belongs to the cytochrome b family. As to quaternary structure, the cytochrome bc1 complex contains 11 subunits: 3 respiratory subunits (MT-CYB, CYC1 and UQCRFS1), 2 core proteins (UQCRC1 and UQCRC2) and 6 low-molecular weight proteins (UQCRH/QCR6, UQCRB/QCR7, UQCRQ/QCR8, UQCR10/QCR9, UQCR11/QCR10 and a cleavage product of UQCRFS1). This cytochrome bc1 complex then forms a dimer. It depends on heme b as a cofactor.

It is found in the mitochondrion inner membrane. Component of the ubiquinol-cytochrome c reductase complex (complex III or cytochrome b-c1 complex) that is part of the mitochondrial respiratory chain. The b-c1 complex mediates electron transfer from ubiquinol to cytochrome c. Contributes to the generation of a proton gradient across the mitochondrial membrane that is then used for ATP synthesis. This is Cytochrome b (MT-CYB) from Akodon philipmyersi (Myers' grass mouse).